The primary structure comprises 451 residues: NADH-quinone oxidoreductase subunit D (451 aa).

Belongs to the complex I 49 kDa subunit family. As to quaternary structure, NDH-1 is composed of 14 different subunits. Subunits NuoB, C, D, E, F, and G constitute the peripheral sector of the complex.

The protein resides in the cell inner membrane. It catalyses the reaction a quinone + NADH + 5 H(+)(in) = a quinol + NAD(+) + 4 H(+)(out). Its function is as follows. NDH-1 shuttles electrons from NADH, via FMN and iron-sulfur (Fe-S) centers, to quinones in the respiratory chain. The immediate electron acceptor for the enzyme in this species is believed to be a menaquinone. Couples the redox reaction to proton translocation (for every two electrons transferred, four hydrogen ions are translocated across the cytoplasmic membrane), and thus conserves the redox energy in a proton gradient. This chain is NADH-quinone oxidoreductase subunit D, found in Salinibacter ruber (strain DSM 13855 / M31).